Reading from the N-terminus, the 586-residue chain is Aspartate--tRNA ligase (586 aa).

An L-aspartate-binding site is contributed by glutamate 171. The interval 195–198 (QLFK) is aspartate. Arginine 217 is a binding site for L-aspartate. Residues 217–219 (RDE) and glutamine 226 contribute to the ATP site. An L-aspartate-binding site is contributed by histidine 448. Glutamate 482 contributes to the ATP binding site. An L-aspartate-binding site is contributed by arginine 489. ATP is bound at residue 534-537 (GLDR).

The protein belongs to the class-II aminoacyl-tRNA synthetase family. Type 1 subfamily. As to quaternary structure, homodimer.

Its subcellular location is the cytoplasm. It catalyses the reaction tRNA(Asp) + L-aspartate + ATP = L-aspartyl-tRNA(Asp) + AMP + diphosphate. Its function is as follows. Catalyzes the attachment of L-aspartate to tRNA(Asp) in a two-step reaction: L-aspartate is first activated by ATP to form Asp-AMP and then transferred to the acceptor end of tRNA(Asp). The sequence is that of Aspartate--tRNA ligase from Buchnera aphidicola subsp. Acyrthosiphon pisum (strain 5A).